Here is a 154-residue protein sequence, read N- to C-terminus: Crossover junction endodeoxyribonuclease RuvC (154 aa).

Active-site residues include D7, E67, and D139. 3 residues coordinate Mg(2+): D7, E67, and D139.

Belongs to the RuvC family. In terms of assembly, homodimer which binds Holliday junction (HJ) DNA. The HJ becomes 2-fold symmetrical on binding to RuvC with unstacked arms; it has a different conformation from HJ DNA in complex with RuvA. In the full resolvosome a probable DNA-RuvA(4)-RuvB(12)-RuvC(2) complex forms which resolves the HJ. The cofactor is Mg(2+).

It localises to the cytoplasm. The enzyme catalyses Endonucleolytic cleavage at a junction such as a reciprocal single-stranded crossover between two homologous DNA duplexes (Holliday junction).. Its function is as follows. The RuvA-RuvB-RuvC complex processes Holliday junction (HJ) DNA during genetic recombination and DNA repair. Endonuclease that resolves HJ intermediates. Cleaves cruciform DNA by making single-stranded nicks across the HJ at symmetrical positions within the homologous arms, yielding a 5'-phosphate and a 3'-hydroxyl group; requires a central core of homology in the junction. The consensus cleavage sequence is 5'-(A/T)TT(C/G)-3'. Cleavage occurs on the 3'-side of the TT dinucleotide at the point of strand exchange. HJ branch migration catalyzed by RuvA-RuvB allows RuvC to scan DNA until it finds its consensus sequence, where it cleaves and resolves the cruciform DNA. This Parasynechococcus marenigrum (strain WH8102) protein is Crossover junction endodeoxyribonuclease RuvC.